We begin with the raw amino-acid sequence, 235 residues long: uncharacterized protein (235 aa).

This sequence belongs to the UreF family.

It is found in the cytoplasm. The protein resides in the nucleus. Its function is as follows. Probably facilitates nickel incorporation. This is an uncharacterized protein from Schizosaccharomyces pombe (strain 972 / ATCC 24843) (Fission yeast).